We begin with the raw amino-acid sequence, 145 residues long: Deoxyuridine 5'-triphosphate nucleotidohydrolase (145 aa).

Substrate contacts are provided by residues 64 to 66, asparagine 77, 81 to 83, and methionine 91; these read RSG and TID.

It belongs to the dUTPase family. Mg(2+) is required as a cofactor.

It catalyses the reaction dUTP + H2O = dUMP + diphosphate + H(+). It participates in pyrimidine metabolism; dUMP biosynthesis; dUMP from dCTP (dUTP route): step 2/2. Functionally, this enzyme is involved in nucleotide metabolism: it produces dUMP, the immediate precursor of thymidine nucleotides and it decreases the intracellular concentration of dUTP so that uracil cannot be incorporated into DNA. The chain is Deoxyuridine 5'-triphosphate nucleotidohydrolase from Leptospira interrogans serogroup Icterohaemorrhagiae serovar copenhageni (strain Fiocruz L1-130).